The primary structure comprises 398 residues: Chorismate synthase (398 aa).

NADP(+)-binding residues include Arg-44 and Arg-50. FMN-binding positions include 133–135 (RAS), 261–262 (QA), Gly-306, 321–325 (KPIPT), and Arg-347.

The protein belongs to the chorismate synthase family. In terms of assembly, homotetramer. FMNH2 is required as a cofactor.

It carries out the reaction 5-O-(1-carboxyvinyl)-3-phosphoshikimate = chorismate + phosphate. The protein operates within metabolic intermediate biosynthesis; chorismate biosynthesis; chorismate from D-erythrose 4-phosphate and phosphoenolpyruvate: step 7/7. In terms of biological role, catalyzes the anti-1,4-elimination of the C-3 phosphate and the C-6 proR hydrogen from 5-enolpyruvylshikimate-3-phosphate (EPSP) to yield chorismate, which is the branch point compound that serves as the starting substrate for the three terminal pathways of aromatic amino acid biosynthesis. This reaction introduces a second double bond into the aromatic ring system. The polypeptide is Chorismate synthase (Aquifex aeolicus (strain VF5)).